Here is a 363-residue protein sequence, read N- to C-terminus: Chorismate synthase (363 aa).

Position 47 (Arg47) interacts with NADP(+). FMN is bound by residues 124–126, Gly286, 301–305, and Arg327; these read RAS and KPTAT.

It belongs to the chorismate synthase family. Homotetramer. FMNH2 serves as cofactor.

The catalysed reaction is 5-O-(1-carboxyvinyl)-3-phosphoshikimate = chorismate + phosphate. It participates in metabolic intermediate biosynthesis; chorismate biosynthesis; chorismate from D-erythrose 4-phosphate and phosphoenolpyruvate: step 7/7. Its function is as follows. Catalyzes the anti-1,4-elimination of the C-3 phosphate and the C-6 proR hydrogen from 5-enolpyruvylshikimate-3-phosphate (EPSP) to yield chorismate, which is the branch point compound that serves as the starting substrate for the three terminal pathways of aromatic amino acid biosynthesis. This reaction introduces a second double bond into the aromatic ring system. This Prochlorococcus marinus (strain MIT 9211) protein is Chorismate synthase.